Reading from the N-terminus, the 91-residue chain is RNA-binding protein Hfq (91 aa).

Residues 9–68 form the Sm domain; it reads DPFLNALRRERVPVSIYLVNGIKLQGQVESFDQFVILLKNTVSQMVYKHAISTVVPSRPF. The tract at residues 66–91 is disordered; sequence RPFNVGSHQGGSSNYNAQQDDSAGEQ. The segment covering 71–91 has biased composition (polar residues); that stretch reads GSHQGGSSNYNAQQDDSAGEQ.

Belongs to the Hfq family. As to quaternary structure, homohexamer.

Functionally, RNA chaperone that binds small regulatory RNA (sRNAs) and mRNAs to facilitate mRNA translational regulation in response to envelope stress, environmental stress and changes in metabolite concentrations. Also binds with high specificity to tRNAs. The sequence is that of RNA-binding protein Hfq from Shewanella amazonensis (strain ATCC BAA-1098 / SB2B).